Reading from the N-terminus, the 612-residue chain is Phosphopentomutase (612 aa).

A2 bears the N-acetylalanine mark. The alpha-D-glucose 1,6-bisphosphate site is built by R63 and S165. The active-site Phosphoserine intermediate is the S165. Mg(2+)-binding residues include S165, D322, D324, and D326. S165 bears the Phosphoserine mark. Alpha-D-glucose 1,6-bisphosphate-binding residues include D326, R327, T400, E424, and K438.

Belongs to the phosphohexose mutase family. Monomer. It depends on Mg(2+) as a cofactor.

The protein resides in the cytoplasm. It localises to the cytosol. The catalysed reaction is alpha-D-ribose 1-phosphate = D-ribose 5-phosphate. The enzyme catalyses 2-deoxy-alpha-D-ribose 1-phosphate = 2-deoxy-D-ribose 5-phosphate. It catalyses the reaction alpha-D-glucose 1-phosphate = alpha-D-glucose 6-phosphate. It carries out the reaction O-phospho-L-seryl-[protein] + alpha-D-glucose 1-phosphate = alpha-D-glucose 1,6-bisphosphate + L-seryl-[protein]. The catalysed reaction is alpha-D-glucose 1,6-bisphosphate + L-seryl-[protein] = O-phospho-L-seryl-[protein] + alpha-D-glucose 6-phosphate. In terms of biological role, catalyzes the conversion of the nucleoside breakdown products ribose-1-phosphate and deoxyribose-1-phosphate to the corresponding 5-phosphopentoses. Catalyzes the reversible isomerization of alpha-D-glucose 1-phosphate to alpha-D-glucose 6-phosphate but with a lower catalytic efficiency. The mechanism proceeds via the intermediate compound alpha-D-glucose 1,6-bisphosphate. In vitro, also has a low glucose 1,6-bisphosphate synthase activity which is most probably not physiologically relevant. The sequence is that of Phosphopentomutase (PGM2) from Pongo abelii (Sumatran orangutan).